The chain runs to 394 residues: MVVFSKTAALVLGLSTAVSAAPAPTRKGFTINQIARPANKTRTVNLPGLYARSLAKFGGTVPQSVKEAASKGSAVTTPQNNDEEYLTPVTVGKSTLHLDFDTGSADLWVFSDELPSSEQTGHDLYTPSSSATKLSGYSWDISYGDGSSASGDVYRDTVTVGGVTTNKQAVEAASKISSEFVQDTANDGLLGLAFSSINTVQPKAQTTFFDTVKSQLDSPLFAVQLKHDAPGVYDFGYIDDSKYTGSITYTDADSSQGYWGFSTDGYSIGDGSSSSSGFSAIADTGTTLILLDDEIVSAYYEQVSGAQESYEAGGYVFSCSTDLPDFTVVIGDYKAVVPGKYINYAPVSTGSSTCYGGIQSNSGLGLSILGDVFLKSQYVVFNSEGPKLGFAAQA.

Residues 1-20 form the signal peptide; that stretch reads MVVFSKTAALVLGLSTAVSA. Positions 21-69 are cleaved as a propeptide — activation peptide; sequence APAPTRKGFTINQIARPANKTRTVNLPGLYARSLAKFGGTVPQSVKEAA. Positions 85–391 constitute a Peptidase A1 domain; it reads YLTPVTVGKS…NSEGPKLGFA (307 aa). The active site involves D101. Residues S129 and S304 are each glycosylated (O-linked (Man...) serine). A disulfide bridge connects residues C319 and C354.

This sequence belongs to the peptidase A1 family. Monomer.

Its subcellular location is the secreted. It catalyses the reaction Hydrolysis of proteins with broad specificity. Generally favors hydrophobic residues in P1 and P1', but also accepts Lys in P1, which leads to activation of trypsinogen. Does not clot milk.. Functionally, secreted aspartic endopeptidase that allows assimilation of proteinaceous substrates. The scissile peptide bond is attacked by a nucleophilic water molecule activated by two aspartic residues in the active site. Shows a broad primary substrate specificity. Favors hydrophobic residues at the P1 and P1' positions, but also accepts a lysine residue in the P1 position, leading to the activation of trypsinogen and chymotrypsinogen A. The chain is Aspergillopepsin-1 (pepA) from Aspergillus phoenicis (Aspergillus saitoi).